We begin with the raw amino-acid sequence, 445 residues long: Ribulose bisphosphate carboxylase large chain (445 aa).

2 residues coordinate substrate: Asn89 and Thr139. The active-site Proton acceptor is Lys141. Lys143 contacts substrate. Mg(2+)-binding residues include Lys167, Asp169, and Glu170. Lys167 is modified (N6-carboxylysine). His260 functions as the Proton acceptor in the catalytic mechanism. Residues Arg261, His293, and Ser345 each coordinate substrate.

The protein belongs to the RuBisCO large chain family. Type I subfamily. Heterohexadecamer of 8 large chains and 8 small chains; disulfide-linked. The disulfide link is formed within the large subunit homodimers. Mg(2+) serves as cofactor. The disulfide bond which can form in the large chain dimeric partners within the hexadecamer appears to be associated with oxidative stress and protein turnover.

Its subcellular location is the plastid. It is found in the chloroplast. The enzyme catalyses 2 (2R)-3-phosphoglycerate + 2 H(+) = D-ribulose 1,5-bisphosphate + CO2 + H2O. It catalyses the reaction D-ribulose 1,5-bisphosphate + O2 = 2-phosphoglycolate + (2R)-3-phosphoglycerate + 2 H(+). Its function is as follows. RuBisCO catalyzes two reactions: the carboxylation of D-ribulose 1,5-bisphosphate, the primary event in carbon dioxide fixation, as well as the oxidative fragmentation of the pentose substrate in the photorespiration process. Both reactions occur simultaneously and in competition at the same active site. The polypeptide is Ribulose bisphosphate carboxylase large chain (Callicarpa dichotoma (Purple beautyberry)).